Consider the following 174-residue polypeptide: Squamosa promoter-binding-like protein 4 (174 aa).

The segment at 1–42 (MEGKRSQGQGYMKKKSYLVEEDMETDTDEEEEVGRDRVRGSR) is disordered. Positions 19–33 (VEEDMETDTDEEEEV) are enriched in acidic residues. The SBP-type zinc-finger motif lies at 51 to 128 (LRLCQVDRCT…AGHNERRRKS (78 aa)). Residues C54, C59, C76, H79, C95, C98, H102, and C114 each coordinate Zn(2+). The Bipartite nuclear localization signal motif lies at 111 to 127 (KRSCRRRLAGHNERRRK). The span at 118-127 (LAGHNERRRK) shows a compositional bias: basic residues. Disordered regions lie at residues 118–148 (LAGHNERRRKSSGESTYGEGSGRRGINGQVV) and 155–174 (SRVEMTLPMPNSSFKRPQIR). The segment covering 163–174 (MPNSSFKRPQIR) has biased composition (polar residues).

Requires Zn(2+) as cofactor. In terms of tissue distribution, expressed in the rib meristem and inter-primordial tissue of the inflorescence apex.

The protein resides in the nucleus. The protein localises to the cytoplasm. Trans-acting factor that binds specifically to the consensus nucleotide sequence 5'-TNCGTACAA-3' of AP1 promoter. Promotes both vegetative phase change and flowering. In Arabidopsis thaliana (Mouse-ear cress), this protein is Squamosa promoter-binding-like protein 4 (SPL4).